The chain runs to 294 residues: MSIKDQIFLASQHLAPHHLVSRGMGLLADSRIPALKNAMISRFVQRYNVDMSEALVEDPLAYPCFNDFFTRALKPDARPLDDDSANVLSPADGTISQLGPIREGRIFQAKGHSFGLTALLGGDAERAAPFEGGDFATIYLSPRDYHRVHMPVTGTLREMVHVPGRLFSVNPLTANTVPDLFARNERVVCIFDTAYGPMAVILVGAMIVASVETVWAGLVTPHKREVRSTRYGPQEPIVLERGAEMGRFKLGSTAIVLFGPGRIRWFDTPSVRGPIRMGETLALPANHLEDVPAV.

Catalysis depends on charge relay system; for autoendoproteolytic cleavage activity residues D92, H149, and S252. The active-site Schiff-base intermediate with substrate; via pyruvic acid; for decarboxylase activity is S252. At S252 the chain carries Pyruvic acid (Ser); by autocatalysis.

It belongs to the phosphatidylserine decarboxylase family. PSD-B subfamily. Prokaryotic type I sub-subfamily. As to quaternary structure, heterodimer of a large membrane-associated beta subunit and a small pyruvoyl-containing alpha subunit. Pyruvate is required as a cofactor. Is synthesized initially as an inactive proenzyme. Formation of the active enzyme involves a self-maturation process in which the active site pyruvoyl group is generated from an internal serine residue via an autocatalytic post-translational modification. Two non-identical subunits are generated from the proenzyme in this reaction, and the pyruvate is formed at the N-terminus of the alpha chain, which is derived from the carboxyl end of the proenzyme. The autoendoproteolytic cleavage occurs by a canonical serine protease mechanism, in which the side chain hydroxyl group of the serine supplies its oxygen atom to form the C-terminus of the beta chain, while the remainder of the serine residue undergoes an oxidative deamination to produce ammonia and the pyruvoyl prosthetic group on the alpha chain. During this reaction, the Ser that is part of the protease active site of the proenzyme becomes the pyruvoyl prosthetic group, which constitutes an essential element of the active site of the mature decarboxylase.

It localises to the cell membrane. It catalyses the reaction a 1,2-diacyl-sn-glycero-3-phospho-L-serine + H(+) = a 1,2-diacyl-sn-glycero-3-phosphoethanolamine + CO2. The protein operates within phospholipid metabolism; phosphatidylethanolamine biosynthesis; phosphatidylethanolamine from CDP-diacylglycerol: step 2/2. Its function is as follows. Catalyzes the formation of phosphatidylethanolamine (PtdEtn) from phosphatidylserine (PtdSer). This chain is Phosphatidylserine decarboxylase proenzyme, found in Bordetella avium (strain 197N).